A 407-amino-acid chain; its full sequence is MSAVPLRNGKAAASGVRQVTVLGATGSIGDSTMDLLRATPERYQVEALTANSNVAGLAKLAIEFNARFAAVADASLLGDLRAALAGTGIECGAGEGAVIEAAARPSDWVMAAVAGAAGLKPALAAVDRGATVALANKECLVCAGEFFMQRAADAQACILPADSEHNALFQALASGDRAELTKVIITASGGPFRTWAAADIEQATLAQALKHPNWSMGQKITIDSASMMNKGLEVIEAHWLFALSPDEIEVVVHPQSIIHGMVEFSDRSVVAQLGAPDMRIPIAHCLGWPDRIVGRAAALDLTKIGQLTFEAPDFARFPGLRLAYDALRAGHCATTVYNAANEIAVAAFVKEQIRFGAIARLVEETLNAWIRAGNLAPLGSADDAISVDHKARNLAATLLPQIAAKAS.

T25, G26, S27, I28, N53, and N136 together coordinate NADPH. K137 lines the 1-deoxy-D-xylulose 5-phosphate pocket. E138 is a binding site for NADPH. A Mn(2+)-binding site is contributed by D162. The 1-deoxy-D-xylulose 5-phosphate site is built by S163, E164, S188, and H211. E164 serves as a coordination point for Mn(2+). G217 contacts NADPH. Positions 224, 229, 230, and 233 each coordinate 1-deoxy-D-xylulose 5-phosphate. Residue E233 coordinates Mn(2+).

The protein belongs to the DXR family. Mg(2+) is required as a cofactor. Mn(2+) serves as cofactor.

It carries out the reaction 2-C-methyl-D-erythritol 4-phosphate + NADP(+) = 1-deoxy-D-xylulose 5-phosphate + NADPH + H(+). The protein operates within isoprenoid biosynthesis; isopentenyl diphosphate biosynthesis via DXP pathway; isopentenyl diphosphate from 1-deoxy-D-xylulose 5-phosphate: step 1/6. Functionally, catalyzes the NADPH-dependent rearrangement and reduction of 1-deoxy-D-xylulose-5-phosphate (DXP) to 2-C-methyl-D-erythritol 4-phosphate (MEP). The polypeptide is 1-deoxy-D-xylulose 5-phosphate reductoisomerase (Rhodopseudomonas palustris (strain BisA53)).